A 695-amino-acid chain; its full sequence is Glycine--tRNA ligase beta subunit (695 aa).

The protein belongs to the class-II aminoacyl-tRNA synthetase family. Tetramer of two alpha and two beta subunits.

The protein resides in the cytoplasm. It catalyses the reaction tRNA(Gly) + glycine + ATP = glycyl-tRNA(Gly) + AMP + diphosphate. The polypeptide is Glycine--tRNA ligase beta subunit (Lawsonia intracellularis (strain PHE/MN1-00)).